Consider the following 406-residue polypeptide: Ubiquitin-associated domain-containing protein 1 (406 aa).

The 85-residue stretch at 14 to 98 (LRLHICSLDG…LLLVKKRAPP (85 aa)) folds into the Ubiquitin-like domain. The interval 95–122 (RAPPPTPKMAEVSADEKRKQDQKAPDKD) is disordered. The span at 108-122 (ADEKRKQDQKAPDKD) shows a compositional bias: basic and acidic residues. Positions 186 to 231 (EDDEDRVDEVALRQLTEMGFPESRAVKALRLNHMSVTQAMEWLIEH) constitute a UBA 1 domain. A compositionally biased stretch (low complexity) spans 238 to 257 (DAPLPCENSSEAAGGLATGE). The disordered stretch occupies residues 238-272 (DAPLPCENSSEAAGGLATGEAETKPTLGAGAEDPK). The UBA 2 domain maps to 289-329 (RPDPRAVIALMEMGFDEKEVIDALRVNNNQQDAACEWLLGD). The STI1 domain occupies 354–393 (NPVVQLGLTNPKTLLAFEDMLENPLNSTQWMNDPETGPVM).

Component of the KPC complex.

It is found in the cytoplasm. It functions in the pathway protein modification; protein ubiquitination. Functionally, non-catalytic component of the KPC complex, a E3 ubiquitin-protein ligase complex that mediates polyubiquitination of target proteins, such as CDKN1B and NFKB1. Within the KPC complex, UBAC1 acts as an adapter that promotes the transfer of target proteins that have been polyubiquitinated by RNF123/KPC1 to the 26S proteasome. The chain is Ubiquitin-associated domain-containing protein 1 (ubac1) from Xenopus tropicalis (Western clawed frog).